Here is a 78-residue protein sequence, read N- to C-terminus: Protein GPR15LG (78 aa).

Residues 1–24 form the signal peptide; that stretch reads MRLLALSGLLCMLLLCFCIFSSEG. Disulfide bonds link Cys-37-Cys-60 and Cys-38-Cys-57.

As to quaternary structure, interacts with SUSD2; the interaction is direct. As to expression, highly abundant in the testis, colon, eye, and tongue. Detected in the epithelial layer of the colon, but not the small intestine.

The protein resides in the secreted. Highly cationic protein that has multiple functions. Acts as a chemotactic factor that mediates lymphocytes recruitment to epithelia through binding and activation of the G-protein coupled receptor GPR15. May be a tumor suppressor; together with SUSD2 has a growth inhibitory effect on colon cancer cells which includes G1 cell cycle arrest. May regulate keratinocyte proliferation. In addition, through activation of Mas-related G protein-coupled receptors (MRGPRs) contributes to pruritogenesis by activating itch-selective sensory neurons and mast cells degranulation. Functionally, has antimicrobial activity against Gram-positive bacteria, including Staphylococcus aureus and Actinomyces spec., and Mycoplasma hominis and lentivirus. The sequence is that of Protein GPR15LG (Gpr15lg) from Mus musculus (Mouse).